The primary structure comprises 207 residues: Dephospho-CoA kinase (207 aa).

One can recognise a DPCK domain in the interval 5 to 202 (VVGLTGGIGS…LQYLKLSAEK (198 aa)). 13–18 (GSGKST) serves as a coordination point for ATP.

This sequence belongs to the CoaE family.

The protein resides in the cytoplasm. It catalyses the reaction 3'-dephospho-CoA + ATP = ADP + CoA + H(+). Its pathway is cofactor biosynthesis; coenzyme A biosynthesis; CoA from (R)-pantothenate: step 5/5. Catalyzes the phosphorylation of the 3'-hydroxyl group of dephosphocoenzyme A to form coenzyme A. The sequence is that of Dephospho-CoA kinase from Dechloromonas aromatica (strain RCB).